An 84-amino-acid chain; its full sequence is MAHKKGGGSTKNGRDSNPKYLGIKASGGSSVSAGSIIVRQRGTVFKPGNNAGIGKDHTIFALVDGNVHFRNTRNDKKLIDILPS.

The interval 1–29 (MAHKKGGGSTKNGRDSNPKYLGIKASGGS) is disordered.

It belongs to the bacterial ribosomal protein bL27 family.

The chain is Large ribosomal subunit protein bL27 from Chlorobium phaeobacteroides (strain BS1).